A 71-amino-acid chain; its full sequence is Large ribosomal subunit protein uL30 (71 aa).

The protein belongs to the universal ribosomal protein uL30 family. Part of the 50S ribosomal subunit.

The sequence is that of Large ribosomal subunit protein uL30 from Borreliella burgdorferi (strain ATCC 35210 / DSM 4680 / CIP 102532 / B31) (Borrelia burgdorferi).